Consider the following 701-residue polypeptide: Polyribonucleotide nucleotidyltransferase (701 aa).

Mg(2+)-binding residues include Asp-489 and Asp-495. Residues 556-615 (PRIHTMKIHPDKIREVIGSGGKVIRSITEETGCAIDIEDDGTIRIASSDQASAEQAVKII) enclose the KH domain. An S1 motif domain is found at 625–693 (GQVYEGKVVR…RQGRVKLTMK (69 aa)).

The protein belongs to the polyribonucleotide nucleotidyltransferase family. The cofactor is Mg(2+).

The protein localises to the cytoplasm. The catalysed reaction is RNA(n+1) + phosphate = RNA(n) + a ribonucleoside 5'-diphosphate. Involved in mRNA degradation. Catalyzes the phosphorolysis of single-stranded polyribonucleotides processively in the 3'- to 5'-direction. This Magnetococcus marinus (strain ATCC BAA-1437 / JCM 17883 / MC-1) protein is Polyribonucleotide nucleotidyltransferase.